Consider the following 267-residue polypeptide: Coiled-coil domain-containing protein 90B, mitochondrial (267 aa).

The transit peptide at 1–47 (MKGSQLYRHLSLQGNRLHLHLFQGKKLQLHPSQGHKGTAHRTWKKGF) directs the protein to the mitochondrion. Positions 142-175 (LEKSEFATLRAENEKMKIELEHVRQHLLNETNRI) form a coiled coil. The chain crosses the membrane as a helical span at residues 244-266 (TVRYMAASVFTCLAIALGFYRLW).

The protein belongs to the CCDC90 family.

Its subcellular location is the mitochondrion membrane. This Xenopus tropicalis (Western clawed frog) protein is Coiled-coil domain-containing protein 90B, mitochondrial (ccdc90b).